The sequence spans 83 residues: Large ribosomal subunit protein eL43 (83 aa).

Zn(2+) contacts are provided by cysteine 38, cysteine 41, cysteine 56, and cysteine 59. A C4-type zinc finger spans residues 38–59 (CPVCGRRAVKRISTGIWQCTKC).

Belongs to the eukaryotic ribosomal protein eL43 family. Putative zinc-binding subfamily. As to quaternary structure, part of the 50S ribosomal subunit. Zn(2+) serves as cofactor.

In terms of biological role, binds to the 23S rRNA. The protein is Large ribosomal subunit protein eL43 of Pyrococcus horikoshii (strain ATCC 700860 / DSM 12428 / JCM 9974 / NBRC 100139 / OT-3).